Reading from the N-terminus, the 674-residue chain is Protein phosphatase 1 regulatory subunit 15A (674 aa).

The Cytoplasmic segment spans residues 1–21 (MAPGQAPHQATPWRDAHPFFL). The segment at 1-60 (MAPGQAPHQATPWRDAHPFFLLSPVMGLLSRAWSRLRGLGPLEPWLVEAVKGAALVEAGL) is required for localization in the endoplasmic reticulum. An intramembrane region (helical) is located at residues 22–39 (LSPVMGLLSRAWSRLRGL). Residues 40–674 (GPLEPWLVEA…AALDLSGRRG (635 aa)) lie on the Cytoplasmic side of the membrane. The segment at 65 to 504 (RTPLAIPHTP…AAEDWGEAEP (440 aa)) is disordered. Phosphoserine is present on Ser-143. Positions 162 to 172 (KAEEEGVAEEE) are enriched in acidic residues. Positions 206–221 (TSTSALSPGSKPSTWV) are enriched in polar residues. A compositionally biased stretch (basic and acidic residues) spans 232–241 (TEDKRTERSK). Residues 246 to 256 (TSVSPRSSGSD) are compositionally biased toward polar residues. Basic and acidic residues predominate over residues 258-281 (RSWEYRSGEASEEKEEKAHKETGK). Tyr-262 is modified (phosphotyrosine). Residues 282-298 (GEAAPGPQSSAPAQRPQ) are compositionally biased toward low complexity. 4 repeat units span residues 337 to 369 (AFLK…SDEE), 384 to 417 (VFLK…REAE), 427 to 460 (AFLK…SEAA), and 477 to 510 (AHFR…FRVA). Residues 337 to 510 (AFLKAWVYWP…EAEPCPFRVA (174 aa)) are 4 X 34 AA approximate repeats. Residues 337 to 510 (AFLKAWVYWP…EAEPCPFRVA (174 aa)) form an interaction with SMAD7 region. The segment covering 348-373 (EDTEEEEDEEEDEDSDSGSDEEEGEA) has biased composition (acidic residues). Tyr-391 carries the post-translational modification Phosphotyrosine. Residues 395–415 (EDTEEEEDEDSDTGSAEDERE) show a composition bias toward acidic residues. A compositionally biased stretch (low complexity) spans 418–427 (TSASTPPASA). Phosphotyrosine is present on Tyr-434. Residues 439–458 (DTEEEEDEDVDSEDKEDDSE) are compositionally biased toward acidic residues. The span at 466–477 (SDPHPSHPDQRA) shows a compositional bias: basic and acidic residues. Residues 483-555 (GYRPGKETEE…DPETPLKARK (73 aa)) form an interaction with KMT2A/MLL1 region. A compositionally biased stretch (acidic residues) spans 490–501 (TEEEEAAEDWGE). Tyr-512 is modified (phosphotyrosine). 2 disordered regions span residues 534–554 (RLKR…LKAR) and 625–674 (APIP…GRRG). The segment at 536-583 (KRPETPTHDPDPETPLKARKVRFSEKVTVHFLAVWAGPAQAARQGPWE) is interaction with SMARCB1. Residues 537–554 (RPETPTHDPDPETPLKAR) show a composition bias toward basic and acidic residues. Residues 630-666 (LTQTLPSSSVPSSPVQTTPLSQAVATPSRSSAAAAAA) show a composition bias toward low complexity.

The protein belongs to the PPP1R15 family. Interacts with PPP1CA. Interacts with EIF2S1. Interacts with PCNA. Interacts with LYN and KMT2A/MLL1. Interacts with PPP1R1A and SMARCB1. Interacts with SMAD7. Interacts with BAG1. Interacts with NOX4. As to quaternary structure, (Microbial infection) Interacts with enterovirus 71/EV71 non-structural protein precursor 3CD; this interaction promotes EV71 replication. In terms of processing, phosphorylated at multiple Ser/Thr residues. Phosphorylated on tyrosine by LYN; which impairs its antiproliferative activity. Phosphorylation at Tyr-262 enhances proteasomal degradation, this position is dephosphorylated by PTPN2. Polyubiquitinated. Exhibits a rapid proteasomal degradation with a half-life under 1 hour, ubiquitination depends on endoplasmic reticulum association.

It is found in the endoplasmic reticulum membrane. The protein resides in the mitochondrion outer membrane. Its function is as follows. Recruits the serine/threonine-protein phosphatase PPP1CA to prevents excessive phosphorylation of the translation initiation factor eIF-2A/EIF2S1, thereby reversing the shut-off of protein synthesis initiated by stress-inducible kinases and facilitating recovery of cells from stress. Down-regulates the TGF-beta signaling pathway by promoting dephosphorylation of TGFB1 by PP1. May promote apoptosis by inducing p53/TP53 phosphorylation on 'Ser-15'. Plays an essential role in autophagy by tuning translation during starvation, thus enabling lysosomal biogenesis and a sustained autophagic flux. Also acts a viral restriction factor by attenuating HIV-1 replication. Mechanistically, mediates the inhibition of HIV-1 TAR RNA-mediated translation. (Microbial infection) Promotes enterovirus 71 replication by mediating the internal ribosome entry site (IRES) activity of viral 5'-UTR. The sequence is that of Protein phosphatase 1 regulatory subunit 15A (PPP1R15A) from Homo sapiens (Human).